A 288-amino-acid polypeptide reads, in one-letter code: ATP synthase gamma chain (288 aa).

Belongs to the ATPase gamma chain family. F-type ATPases have 2 components, CF(1) - the catalytic core - and CF(0) - the membrane proton channel. CF(1) has five subunits: alpha(3), beta(3), gamma(1), delta(1), epsilon(1). CF(0) has three main subunits: a, b and c.

The protein localises to the cell inner membrane. Functionally, produces ATP from ADP in the presence of a proton gradient across the membrane. The gamma chain is believed to be important in regulating ATPase activity and the flow of protons through the CF(0) complex. This Vesicomyosocius okutanii subsp. Calyptogena okutanii (strain HA) protein is ATP synthase gamma chain.